The primary structure comprises 307 residues: Nucleotide-binding protein Achl_1824 (307 aa).

Gly-30–Ser-37 provides a ligand contact to ATP. Residue Asp-81 to Ser-84 participates in GTP binding.

It belongs to the RapZ-like family.

Its function is as follows. Displays ATPase and GTPase activities. The polypeptide is Nucleotide-binding protein Achl_1824 (Pseudarthrobacter chlorophenolicus (strain ATCC 700700 / DSM 12829 / CIP 107037 / JCM 12360 / KCTC 9906 / NCIMB 13794 / A6) (Arthrobacter chlorophenolicus)).